Here is a 225-residue protein sequence, read N- to C-terminus: Urease accessory protein UreG (225 aa).

A disordered region spans residues 1–21; sequence MHLDHHHESAAAVSADARRPD. A GTP-binding site is contributed by 33–40; it reads GPVGSGKT.

Belongs to the SIMIBI class G3E GTPase family. UreG subfamily. Homodimer. UreD, UreF and UreG form a complex that acts as a GTP-hydrolysis-dependent molecular chaperone, activating the urease apoprotein by helping to assemble the nickel containing metallocenter of UreC. The UreE protein probably delivers the nickel.

It is found in the cytoplasm. Facilitates the functional incorporation of the urease nickel metallocenter. This process requires GTP hydrolysis, probably effectuated by UreG. The chain is Urease accessory protein UreG from Streptomyces coelicolor (strain ATCC BAA-471 / A3(2) / M145).